The chain runs to 173 residues: Shikimate kinase (173 aa).

11-16 (GAGKTT) is a binding site for ATP. Thr15 serves as a coordination point for Mg(2+). The substrate site is built by Asp33, Arg57, and Gly79. Arg118 contacts ATP. Arg140 contributes to the substrate binding site.

The protein belongs to the shikimate kinase family. Monomer. It depends on Mg(2+) as a cofactor.

The protein resides in the cytoplasm. It catalyses the reaction shikimate + ATP = 3-phosphoshikimate + ADP + H(+). It participates in metabolic intermediate biosynthesis; chorismate biosynthesis; chorismate from D-erythrose 4-phosphate and phosphoenolpyruvate: step 5/7. Its function is as follows. Catalyzes the specific phosphorylation of the 3-hydroxyl group of shikimic acid using ATP as a cosubstrate. The protein is Shikimate kinase of Parabacteroides distasonis (strain ATCC 8503 / DSM 20701 / CIP 104284 / JCM 5825 / NCTC 11152).